Consider the following 139-residue polypeptide: Ribosome maturation factor RimP (139 aa).

Belongs to the RimP family.

It localises to the cytoplasm. Its function is as follows. Required for maturation of 30S ribosomal subunits. The protein is Ribosome maturation factor RimP of Syntrophomonas wolfei subsp. wolfei (strain DSM 2245B / Goettingen).